The following is a 367-amino-acid chain: Choline-phosphate cytidylyltransferase A (367 aa).

Met-1 carries the post-translational modification N-acetylmethionine. Positions 1-31 (MDAQSSAKVNSRKRRKEVPGPNGATEEDGIP) are disordered. Lys-8 bears the N6-acetyllysine mark. Positions 84, 85, 92, and 122 each coordinate CTP. Residues Lys-122 and Trp-151 each contribute to the phosphocholine site. Residues His-168, Asp-169, Tyr-173, Gln-195, Arg-196, Thr-197, and Ile-200 each contribute to the CTP site. 2 amphipathic regions span residues 228–287 (KELN…EFIG) and 298–315 (ALKH…QAIS). At Ser-233 the chain carries Phosphoserine. The autoinhibitory (AI) stretch occupies residues 272–293 (IDLIQKWEEKSREFIGSFLEMF). Residues 313 to 367 (AISPKQSPSSSPTHERSPSPSFRWPFSGKTSPSSSPASLSRCKAVTCDISEDEED) are disordered. Ser-315 carries the post-translational modification Phosphoserine; by PKC. The segment covering 315-324 (SPKQSPSSSP) has biased composition (polar residues). 4 positions are modified to phosphoserine: Ser-319, Ser-321, Ser-322, and Ser-323. Residues 319-324 (SPSSSP) form repeat 1. Positions 319-348 (SPSSSPTHERSPSPSFRWPFSGKTSPSSSP) are 3 X repeats. Thr-325 carries the phosphothreonine modification. A phosphoserine mark is found at Ser-329 and Ser-331. Residues 329–333 (SPSPS) form a 2; approximate repeat. A compositionally biased stretch (low complexity) spans 330–352 (PSPSFRWPFSGKTSPSSSPASLS). Position 333 is a phosphoserine; by PKC (Ser-333). A Phosphothreonine modification is found at Thr-342. Phosphoserine occurs at positions 343, 345, 346, 347, 350, and 352. Copy 3 of the repeat occupies 343 to 348 (SPSSSP). Thr-358 is subject to Phosphothreonine. Position 362 is a phosphoserine; by CK2 (Ser-362).

This sequence belongs to the cytidylyltransferase family. In terms of assembly, homodimer. Post-translationally, the serine residues of the C-terminus are phosphorylated. The inactive soluble form is stabilized by phosphorylation, the active membrane bound form is promoted by anionic lipids or diacylglycerol, and is stabilized by dephosphorylation. In terms of processing, the N-terminus is blocked. Monoubiquitinated by the SCF(FBXL2) complex, leading to proteasomal degradation.

The protein localises to the cytoplasm. It is found in the cytosol. The protein resides in the membrane. Its subcellular location is the endoplasmic reticulum membrane. It localises to the nucleus. It catalyses the reaction phosphocholine + CTP + H(+) = CDP-choline + diphosphate. It participates in phospholipid metabolism; phosphatidylcholine biosynthesis; phosphatidylcholine from phosphocholine: step 1/2. Its activity is regulated as follows. Interconverts between an inactive cytosolic form and an active membrane-bound form. Activation involves disruption of an inhibitory interaction between helices at the base of the active site and the autoinhibitory (AI) region. Activated by N-methylethanolamine. Activated by oleic acid-containing phosphatidylcholine vesicles. Its function is as follows. Catalyzes the key rate-limiting step in the CDP-choline pathway for phosphatidylcholine biosynthesis. The chain is Choline-phosphate cytidylyltransferase A (Pcyt1a) from Rattus norvegicus (Rat).